We begin with the raw amino-acid sequence, 407 residues long: Na(+)-translocating NADH-quinone reductase subunit F (407 aa).

Residues 3 to 23 traverse the membrane as a helical segment; it reads IILGVAMFTGIVMVLVLLILF. The 2Fe-2S ferredoxin-type domain maps to 32–126; the sequence is GDIAVEVNGD…NLKIELPEEI (95 aa). Residues cysteine 69, cysteine 75, cysteine 78, and cysteine 110 each coordinate [2Fe-2S] cluster. The region spanning 129–269 is the FAD-binding FR-type domain; that stretch reads VKKWECEVIS…SGPFGEFFAK (141 aa).

The protein belongs to the NqrF family. As to quaternary structure, composed of six subunits; NqrA, NqrB, NqrC, NqrD, NqrE and NqrF. [2Fe-2S] cluster serves as cofactor. Requires FAD as cofactor.

The protein localises to the cell inner membrane. It catalyses the reaction a ubiquinone + n Na(+)(in) + NADH + H(+) = a ubiquinol + n Na(+)(out) + NAD(+). Its function is as follows. NQR complex catalyzes the reduction of ubiquinone-1 to ubiquinol by two successive reactions, coupled with the transport of Na(+) ions from the cytoplasm to the periplasm. The first step is catalyzed by NqrF, which accepts electrons from NADH and reduces ubiquinone-1 to ubisemiquinone by a one-electron transfer pathway. This chain is Na(+)-translocating NADH-quinone reductase subunit F, found in Serratia proteamaculans (strain 568).